The primary structure comprises 156 residues: Small ribosomal subunit protein uS7 (156 aa).

The protein belongs to the universal ribosomal protein uS7 family. In terms of assembly, part of the 30S ribosomal subunit. Contacts proteins S9 and S11.

Its function is as follows. One of the primary rRNA binding proteins, it binds directly to 16S rRNA where it nucleates assembly of the head domain of the 30S subunit. Is located at the subunit interface close to the decoding center, probably blocks exit of the E-site tRNA. In Gemmatimonas aurantiaca (strain DSM 14586 / JCM 11422 / NBRC 100505 / T-27), this protein is Small ribosomal subunit protein uS7.